A 307-amino-acid chain; its full sequence is MSGFVDKPVPVEVPGLTHLHTGKVRDLYATESGELVMVASDRVSAFDWVLPTEIPDKGRLLTQLSLWWFDQLSDIIDNHVISDTPPPGAPDDWAGRTLVCRRLDMVPVECVARGYLTGSGLAEYTATGAVCGVRLPEGLVDGSRLDPPIFTPATKAEVGEHDENVSLETVAERHGPALAERLREVTLALYERGREIAEERGILLADTKFEFGWDSDGSLVLADEVLTPDSSRFWPKEEWRPGRPQPSFDKQIIRDWLSSAESGWDRTSETPPPPLPDTVVEHTRARYIEVFERLTGQTADFVGISRS.

It belongs to the SAICAR synthetase family.

It carries out the reaction 5-amino-1-(5-phospho-D-ribosyl)imidazole-4-carboxylate + L-aspartate + ATP = (2S)-2-[5-amino-1-(5-phospho-beta-D-ribosyl)imidazole-4-carboxamido]succinate + ADP + phosphate + 2 H(+). It participates in purine metabolism; IMP biosynthesis via de novo pathway; 5-amino-1-(5-phospho-D-ribosyl)imidazole-4-carboxamide from 5-amino-1-(5-phospho-D-ribosyl)imidazole-4-carboxylate: step 1/2. In Thermobifida fusca (strain YX), this protein is Phosphoribosylaminoimidazole-succinocarboxamide synthase.